A 276-amino-acid polypeptide reads, in one-letter code: Putative respiratory nitrate reductase heme subunit ORF7 (276 aa).

Positions 138 and 228 each coordinate heme b.

In terms of assembly, probable multiprotein complex; a catalytic heterodimer of an alpha and beta chain is proposed to associate with additional subunits involved in membrane attachment and electron transfer. The cofactor is heme b.

Its subcellular location is the cell membrane. Functionally, the respiratory membrane-bound nitrate reductase enzyme complex plays a role in generation of metabolic energy by using nitrate as a terminal electron acceptor during anaerobic conditions. May transfer electrons to the iron-sulfur centers of the catalytic beta subunit. The sequence is that of Putative respiratory nitrate reductase heme subunit ORF7 from Haloferax mediterranei (strain ATCC 33500 / DSM 1411 / JCM 8866 / NBRC 14739 / NCIMB 2177 / R-4) (Halobacterium mediterranei).